Reading from the N-terminus, the 339-residue chain is DNA-directed RNA polymerase subunit alpha (339 aa).

The tract at residues 1–233 (MVREEVAGST…DLFLPFLHAE (233 aa)) is alpha N-terminal domain (alpha-NTD). The interval 264–339 (KKGIPLNCIF…IDLLKNKLSF (76 aa)) is alpha C-terminal domain (alpha-CTD).

This sequence belongs to the RNA polymerase alpha chain family. As to quaternary structure, in plastids the minimal PEP RNA polymerase catalytic core is composed of four subunits: alpha, beta, beta', and beta''. When a (nuclear-encoded) sigma factor is associated with the core the holoenzyme is formed, which can initiate transcription.

Its subcellular location is the plastid. It is found in the chloroplast. It catalyses the reaction RNA(n) + a ribonucleoside 5'-triphosphate = RNA(n+1) + diphosphate. In terms of biological role, DNA-dependent RNA polymerase catalyzes the transcription of DNA into RNA using the four ribonucleoside triphosphates as substrates. The chain is DNA-directed RNA polymerase subunit alpha from Secale strictum (Mountain rye).